We begin with the raw amino-acid sequence, 293 residues long: Ethanolamine ammonia-lyase small subunit (293 aa).

Adenosylcob(III)alamin-binding residues include valine 207 and glutamate 228.

It belongs to the EutC family. In terms of assembly, the basic unit is a heterodimer which dimerizes to form tetramers. The heterotetramers trimerize; 6 large subunits form a core ring with 6 small subunits projecting outwards. Requires adenosylcob(III)alamin as cofactor.

It localises to the bacterial microcompartment. The catalysed reaction is ethanolamine = acetaldehyde + NH4(+). Its pathway is amine and polyamine degradation; ethanolamine degradation. Its function is as follows. Catalyzes the deamination of various vicinal amino-alcohols to oxo compounds. Allows this organism to utilize ethanolamine as the sole source of nitrogen and carbon in the presence of external vitamin B12. The sequence is that of Ethanolamine ammonia-lyase small subunit from Listeria innocua serovar 6a (strain ATCC BAA-680 / CLIP 11262).